Consider the following 405-residue polypeptide: Acetate kinase (405 aa).

Residue Asn-7 participates in Mg(2+) binding. Lys-14 lines the ATP pocket. Arg-98 lines the substrate pocket. The active-site Proton donor/acceptor is the Asp-156. Residues 215–219 (HLGNG), 290–292 (DLR), and 338–342 (GVGEN) each bind ATP. Glu-391 is a binding site for Mg(2+).

Belongs to the acetokinase family. In terms of assembly, homodimer. Mg(2+) is required as a cofactor. Requires Mn(2+) as cofactor.

Its subcellular location is the cytoplasm. It carries out the reaction acetate + ATP = acetyl phosphate + ADP. It functions in the pathway metabolic intermediate biosynthesis; acetyl-CoA biosynthesis; acetyl-CoA from acetate: step 1/2. In terms of biological role, catalyzes the formation of acetyl phosphate from acetate and ATP. Can also catalyze the reverse reaction. This Gloeobacter violaceus (strain ATCC 29082 / PCC 7421) protein is Acetate kinase.